Here is a 50-residue protein sequence, read N- to C-terminus: Small ribosomal subunit protein uS14 (50 aa).

The Zn(2+) site is built by C15, C18, C33, and C36.

The protein belongs to the universal ribosomal protein uS14 family. Zinc-binding uS14 subfamily. In terms of assembly, part of the 30S ribosomal subunit. The cofactor is Zn(2+).

Its function is as follows. Binds 16S rRNA, required for the assembly of 30S particles. This chain is Small ribosomal subunit protein uS14, found in Methanosarcina barkeri (strain Fusaro / DSM 804).